Consider the following 385-residue polypeptide: 4-hydroxy-3-methylbut-2-en-1-yl diphosphate synthase (flavodoxin) (385 aa).

Positions 282, 285, 317, and 324 each coordinate [4Fe-4S] cluster.

This sequence belongs to the IspG family. It depends on [4Fe-4S] cluster as a cofactor.

It catalyses the reaction (2E)-4-hydroxy-3-methylbut-2-enyl diphosphate + oxidized [flavodoxin] + H2O + 2 H(+) = 2-C-methyl-D-erythritol 2,4-cyclic diphosphate + reduced [flavodoxin]. It functions in the pathway isoprenoid biosynthesis; isopentenyl diphosphate biosynthesis via DXP pathway; isopentenyl diphosphate from 1-deoxy-D-xylulose 5-phosphate: step 5/6. Functionally, converts 2C-methyl-D-erythritol 2,4-cyclodiphosphate (ME-2,4cPP) into 1-hydroxy-2-methyl-2-(E)-butenyl 4-diphosphate. The polypeptide is 4-hydroxy-3-methylbut-2-en-1-yl diphosphate synthase (flavodoxin) (Nocardia farcinica (strain IFM 10152)).